The following is a 94-amino-acid chain: Large ribosomal subunit protein bL31 (94 aa).

The segment at 64–94 (KYGMANPDEDSTKNTKSSKKETSEDSSSKGS) is disordered. Residues 73-94 (DSTKNTKSSKKETSEDSSSKGS) are compositionally biased toward basic and acidic residues.

It belongs to the bacterial ribosomal protein bL31 family. Type A subfamily. In terms of assembly, part of the 50S ribosomal subunit.

In terms of biological role, binds the 23S rRNA. The sequence is that of Large ribosomal subunit protein bL31 from Prochlorococcus marinus (strain SARG / CCMP1375 / SS120).